Reading from the N-terminus, the 316-residue chain is Thymidylate synthase (316 aa).

Residues R23 and R178 to R179 contribute to the dUMP site. C198 acts as the Nucleophile in catalysis. DUMP contacts are provided by residues R218–D221, N229, and H259–Y261. D221 provides a ligand contact to (6R)-5,10-methylene-5,6,7,8-tetrahydrofolate. A315 is a binding site for (6R)-5,10-methylene-5,6,7,8-tetrahydrofolate.

This sequence belongs to the thymidylate synthase family. Bacterial-type ThyA subfamily. As to quaternary structure, homodimer.

The protein resides in the cytoplasm. It carries out the reaction dUMP + (6R)-5,10-methylene-5,6,7,8-tetrahydrofolate = 7,8-dihydrofolate + dTMP. It functions in the pathway pyrimidine metabolism; dTTP biosynthesis. Functionally, catalyzes the reductive methylation of 2'-deoxyuridine-5'-monophosphate (dUMP) to 2'-deoxythymidine-5'-monophosphate (dTMP) while utilizing 5,10-methylenetetrahydrofolate (mTHF) as the methyl donor and reductant in the reaction, yielding dihydrofolate (DHF) as a by-product. This enzymatic reaction provides an intracellular de novo source of dTMP, an essential precursor for DNA biosynthesis. The polypeptide is Thymidylate synthase (Pediococcus pentosaceus (strain ATCC 25745 / CCUG 21536 / LMG 10740 / 183-1w)).